Reading from the N-terminus, the 161-residue chain is SsrA-binding protein (161 aa).

It belongs to the SmpB family.

It is found in the cytoplasm. Its function is as follows. Required for rescue of stalled ribosomes mediated by trans-translation. Binds to transfer-messenger RNA (tmRNA), required for stable association of tmRNA with ribosomes. tmRNA and SmpB together mimic tRNA shape, replacing the anticodon stem-loop with SmpB. tmRNA is encoded by the ssrA gene; the 2 termini fold to resemble tRNA(Ala) and it encodes a 'tag peptide', a short internal open reading frame. During trans-translation Ala-aminoacylated tmRNA acts like a tRNA, entering the A-site of stalled ribosomes, displacing the stalled mRNA. The ribosome then switches to translate the ORF on the tmRNA; the nascent peptide is terminated with the 'tag peptide' encoded by the tmRNA and targeted for degradation. The ribosome is freed to recommence translation, which seems to be the essential function of trans-translation. In Haemophilus influenzae (strain 86-028NP), this protein is SsrA-binding protein.